The chain runs to 399 residues: PCI domain-containing protein 2 (399 aa).

The region spanning 210–391 (VTFKYYVGRK…QKLVVSKQNP (182 aa)) is the PCI domain.

This sequence belongs to the CSN12 family.

This Xenopus laevis (African clawed frog) protein is PCI domain-containing protein 2 (pcid2).